Consider the following 152-residue polypeptide: Biogenesis of lysosome-related organelles complex 1 subunit 1 (152 aa).

It belongs to the BLOC1S1 family. In terms of assembly, component of the biogenesis of lysosome-related organelles complex-1 (BLOC-1). Interacts with BLOS2 and SNX1. As to expression, expressed in the whole plant (at protein level).

It localises to the cytoplasm. The protein localises to the endosome. Functionally, component of the biogenesis of lysosome-related organelles complex-1 (BLOC-1), a complex that mediates the vacuolar degradative transport via the intracellular vesicle trafficking from the endosome to the vacuole. Probably regulates the PIN1 and PIN2 homeostasis through its interaction with SNX1. In Arabidopsis thaliana (Mouse-ear cress), this protein is Biogenesis of lysosome-related organelles complex 1 subunit 1 (BLOS1).